The primary structure comprises 402 residues: S-adenosylmethionine synthase (402 aa).

ATP is bound at residue 137–142; that stretch reads GQGSAD.

The protein belongs to the AdoMet synthase 2 family. Mg(2+) is required as a cofactor.

The catalysed reaction is L-methionine + ATP + H2O = S-adenosyl-L-methionine + phosphate + diphosphate. The protein operates within amino-acid biosynthesis; S-adenosyl-L-methionine biosynthesis; S-adenosyl-L-methionine from L-methionine: step 1/1. Its function is as follows. Catalyzes the formation of S-adenosylmethionine from methionine and ATP. The polypeptide is S-adenosylmethionine synthase (Pyrobaculum calidifontis (strain DSM 21063 / JCM 11548 / VA1)).